The following is a 409-amino-acid chain: Bone morphogenetic protein 4 (409 aa).

A signal peptide spans 1–19 (MIPGNRMLMVVLLCQVLLG). The propeptide occupies 20-293 (GASHASLIPE…ALTRRRRAKR (274 aa)). Residue S91 is modified to Phosphoserine. N144 and N209 each carry an N-linked (GlcNAc...) asparagine glycan. Residues 284-308 (ALTRRRRAKRSPKHHPQRARKKNKN) are disordered. Cystine bridges form between C309-C374, C338-C406, and C342-C408. N-linked (GlcNAc...) asparagine glycosylation is found at N351 and N366.

It belongs to the TGF-beta family. Homodimer; disulfide-linked. Interacts with GREM2. Part of a complex consisting of TWSG1 and CHRD. Interacts with the serine proteases, HTRA1 and HTRA3; the interaction with either inhibits BMP4-mediated signaling. The HTRA protease activity is required for this inhibition. Interacts with SOSTDC1. Interacts with FBN1 (via N-terminal domain) and FBN2. Interacts with type I receptor BMPR1A. Interacts with type II receptor BMPR2. Interacts with FSTL1; this interaction inhibits the activation of the BMP4/Smad1/5/8 signaling pathway. Interacts with TGFBR3.

The protein localises to the secreted. Its subcellular location is the extracellular space. It is found in the extracellular matrix. Functionally, growth factor of the TGF-beta superfamily that plays essential roles in many developmental processes, including neurogenesis, vascular development, angiogenesis and osteogenesis. Acts in concert with PTHLH/PTHRP to stimulate ductal outgrowth during embryonic mammary development and to inhibit hair follicle induction. Initiates the canonical BMP signaling cascade by associating with type I receptor BMPR1A and type II receptor BMPR2. Once all three components are bound together in a complex at the cell surface, BMPR2 phosphorylates and activates BMPR1A. In turn, BMPR1A propagates signal by phosphorylating SMAD1/5/8 that travel to the nucleus and act as activators and repressors of transcription of target genes. Positively regulates the expression of odontogenic development regulator MSX1 via inducing the IPO7-mediated import of SMAD1 to the nucleus. Required for MSX1-mediated mesenchymal molar tooth bud development beyond the bud stage, via promoting Wnt signaling. Acts as a positive regulator of odontoblast differentiation during mesenchymal tooth germ formation, expression is repressed during the bell stage by MSX1-mediated inhibition of CTNNB1 signaling. Able to induce its own expression in dental mesenchymal cells and also in the neighboring dental epithelial cells via an MSX1-mediated pathway. Can also signal through non-canonical BMP pathways such as ERK/MAP kinase, PI3K/Akt, or SRC cascades. For example, induces SRC phosphorylation which, in turn, activates VEGFR2, leading to an angiogenic response. The polypeptide is Bone morphogenetic protein 4 (Suncus murinus (Asian house shrew)).